The primary structure comprises 379 residues: Tubby-like F-box protein 7 (379 aa).

The span at 18 to 28 shows a compositional bias: polar residues; that stretch reads FHQGETTTAPE. The disordered stretch occupies residues 18–41; that stretch reads FHQGETTTAPESESIPPPSNMAGS. Positions 42–97 constitute an F-box domain; it reads SSWSAMLPELLGEIIRRVEETEDRWPQRRDVVTCACVSKKWREITHDFARSSLNSG. Disordered stretches follow at residues 193 to 212 and 248 to 278; these read SQPP…RRFA and TLRC…IMKK.

This sequence belongs to the TUB family. Ubiquitous.

In Arabidopsis thaliana (Mouse-ear cress), this protein is Tubby-like F-box protein 7.